Here is a 218-residue protein sequence, read N- to C-terminus: Peroxiredoxin-like 2A (218 aa).

The interval 3-101 (MWSIGAGAIG…DELGVPLYAV (99 aa)) is thioredoxin fold. Catalysis depends on redox-active residues Cys-74 and Cys-77.

The protein belongs to the peroxiredoxin-like PRXL2 family. PRXL2A subfamily.

Its subcellular location is the cytoplasm. It localises to the secreted. Its function is as follows. Involved in redox regulation of the cell. Acts as an antioxidant. Inhibits TNFSF11-induced NFKB1 and JUN activation and osteoclast differentiation. May affect bone resorption and help to maintain bone mass. Acts as a negative regulator of macrophage-mediated inflammation by inhibiting macrophage production of inflammatory cytokines, probably through suppression of the MAPK signaling pathway. In Bos taurus (Bovine), this protein is Peroxiredoxin-like 2A (PRXL2A).